We begin with the raw amino-acid sequence, 364 residues long: ERCC4 domain-containing protein EP364R (364 aa).

Positions 3–102 (FLVADHREHH…QLYFFVEGPA (100 aa)) constitute an ERCC4 domain. Over residues 319–328 (ASRPATQPAA) the composition is skewed to polar residues. Residues 319-352 (ASRPATQPAATQPLHEVSDDATSNASDTSSPIGH) form a disordered region. Residues 338-348 (DATSNASDTSS) are compositionally biased toward low complexity.

This sequence belongs to the asfivirus EP364R family.

Plays a role in the inhibition of type I interferon signaling pathway. Mechanistically, specifically interacts with 2',3'-cGAMP and cleaves it via its phosphodiesterase activity. In turn, prevents 2',3'-cGAMP interaction with host ER-resident STING1 leading to inhibition of downstream signaling pathway and type I interferon production. This is ERCC4 domain-containing protein EP364R from African swine fever virus (strain Badajoz 1971 Vero-adapted) (Ba71V).